A 757-amino-acid polypeptide reads, in one-letter code: RNA-directed RNA polymerase catalytic subunit (757 aa).

A disordered region spans residues 56 to 78 (TTNTETGAHQLNPIDGPLPEDNE). 2 short sequence motifs (nuclear localization signal) span residues 187–195 (RKRRVRDNM) and 203–216 (RTIG…NKRS). A promoter-binding site region spans residues 249–256 (RGFVYFVE). Residues 286-483 (VRKMMTNSQD…GINMSKKKSY (198 aa)) form the RdRp catalytic domain.

It belongs to the influenza viruses polymerase PB1 family. In terms of assembly, influenza RNA polymerase is composed of three subunits: PB1, PB2 and PA. Interacts (via N-terminus) with PA (via C-terminus). Interacts (via C-terminus) with PB2 (via N-terminus); this interaction is essential for transcription initiation. Phosphorylated by host PRKCA.

The protein localises to the host nucleus. It is found in the host cytoplasm. It catalyses the reaction RNA(n) + a ribonucleoside 5'-triphosphate = RNA(n+1) + diphosphate. In terms of biological role, RNA-dependent RNA polymerase which is responsible for replication and transcription of virus RNA segments. The transcription of viral mRNAs occurs by a unique mechanism called cap-snatching. 5' methylated caps of cellular mRNAs are cleaved after 10-13 nucleotides by PA. In turn, these short capped RNAs are used as primers by PB1 for transcription of viral mRNAs. During virus replication, PB1 initiates RNA synthesis and copy vRNA into complementary RNA (cRNA) which in turn serves as a template for the production of more vRNAs. The chain is RNA-directed RNA polymerase catalytic subunit from Aves (Human).